Reading from the N-terminus, the 755-residue chain is von Willebrand factor A domain-containing protein 2 (755 aa).

Positions 1–23 (MPPFLLLEAVCVFLFSRVPPSLP) are cleaved as a signal peptide. The VWFA 1 domain occupies 51-222 (DIMFLLDGSN…DATNGLFSTL (172 aa)). Asn-147 carries N-linked (GlcNAc...) asparagine glycosylation. Residues 296 to 333 (PGPCDSQPCQNGGTCVPEGLDGYQCLCPLAFGGEANCA) form the EGF-like 1 domain. Cystine bridges form between Cys-299–Cys-310, Cys-304–Cys-320, and Cys-322–Cys-332. 2 consecutive VWFA domains span residues 343–517 (DLLF…QGKL) and 531–705 (DLVF…IEWL). The EGF-like 2 domain occupies 712–748 (PVNLCKPSPCMNEGSCVLQNGSYRCKCRDGWEGPHCE). 3 cysteine pairs are disulfide-bonded: Cys-716–Cys-727, Cys-721–Cys-736, and Cys-738–Cys-747.

Forms monomers and multimers. A 55 kDa form is produced by proteolytic cleavage. In terms of tissue distribution, expression is generally absent in normal colon and other normal body tissues, but it is induced an average of 78-fold in Stage II, III, and IV colon cancers, as well as in colon adenomas and colon cancer cell lines.

The protein resides in the secreted. The protein is von Willebrand factor A domain-containing protein 2 (VWA2) of Homo sapiens (Human).